Reading from the N-terminus, the 206-residue chain is Protein GET1 (206 aa).

The Lumenal portion of the chain corresponds to 1 to 4 (MPSL). Residues 5 to 24 (LITVLFLNVIIYVVNTVGAA) form a helical membrane-spanning segment. Over 25–110 (TVDGLLWLLY…TFDMTIKIAR (86 aa)) the chain is Cytoplasmic. The stretch at 75-100 (AKLRRRHDKALEAYEAKNNELTQSKS) forms a coiled coil. Residues 111-131 (WAATSGLMLFLQFWYSKTPIF) traverse the membrane as a helical segment. The Lumenal segment spans residues 132–155 (TLPPGWIPWQVQWVLSFPRAPMGT). The chain crosses the membrane as a helical span at residues 156–172 (VSIQIWGGACATVVALV). Over 173–206 (GDAMKASLAYVSKPKIDRIKLGATMEGKEGKKRQ) the chain is Cytoplasmic.

It belongs to the WRB/GET1 family. In terms of assembly, interacts with GET3.

The protein localises to the endoplasmic reticulum membrane. Required for the post-translational delivery of tail-anchored (TA) proteins to the endoplasmic reticulum. Acts as a membrane receptor for soluble GET3, which recognizes and selectively binds the transmembrane domain of TA proteins in the cytosol. The chain is Protein GET1 from Ajellomyces capsulatus (strain G186AR / H82 / ATCC MYA-2454 / RMSCC 2432) (Darling's disease fungus).